The chain runs to 433 residues: Protein translocase subunit SecY (433 aa).

A run of 10 helical transmembrane segments spans residues 17–37 (IIFT…PIPG), 71–91 (IFAL…LMSV), 117–137 (LTVL…ESMV), 141–161 (GPVV…TLVV), 184–204 (LIIF…MFEL), 212–232 (PLIA…IIFF), 268–288 (GVIP…LANF), 310–330 (YILL…AIVF), 366–386 (LTVI…LLMN), and 388–408 (YVIS…VVLD).

The protein belongs to the SecY/SEC61-alpha family. Component of the Sec protein translocase complex. Heterotrimer consisting of SecY, SecE and SecG subunits. The heterotrimers can form oligomers, although 1 heterotrimer is thought to be able to translocate proteins. Interacts with the ribosome. Interacts with SecDF, and other proteins may be involved. Interacts with SecA.

Its subcellular location is the cell inner membrane. Its function is as follows. The central subunit of the protein translocation channel SecYEG. Consists of two halves formed by TMs 1-5 and 6-10. These two domains form a lateral gate at the front which open onto the bilayer between TMs 2 and 7, and are clamped together by SecE at the back. The channel is closed by both a pore ring composed of hydrophobic SecY resides and a short helix (helix 2A) on the extracellular side of the membrane which forms a plug. The plug probably moves laterally to allow the channel to open. The ring and the pore may move independently. The chain is Protein translocase subunit SecY from Rickettsia typhi (strain ATCC VR-144 / Wilmington).